We begin with the raw amino-acid sequence, 595 residues long: Adenine deaminase 3 (595 aa).

It belongs to the metallo-dependent hydrolases superfamily. Adenine deaminase family. It depends on Mn(2+) as a cofactor.

The catalysed reaction is adenine + H2O + H(+) = hypoxanthine + NH4(+). In Rhizobium meliloti (strain 1021) (Ensifer meliloti), this protein is Adenine deaminase 3.